A 399-amino-acid chain; its full sequence is 1-deoxy-D-xylulose 5-phosphate reductoisomerase (399 aa).

NADPH contacts are provided by Thr-16, Gly-17, Ser-18, Ile-19, Gly-42, Arg-43, Asn-44, and Asn-127. Lys-128 serves as a coordination point for 1-deoxy-D-xylulose 5-phosphate. Glu-129 lines the NADPH pocket. Asp-153 serves as a coordination point for Mn(2+). 4 residues coordinate 1-deoxy-D-xylulose 5-phosphate: Ser-154, Glu-155, Ser-179, and His-202. Residue Glu-155 coordinates Mn(2+). Gly-208 contributes to the NADPH binding site. The 1-deoxy-D-xylulose 5-phosphate site is built by Ser-215, Asn-220, Lys-221, and Glu-224. Position 224 (Glu-224) interacts with Mn(2+).

This sequence belongs to the DXR family. It depends on Mg(2+) as a cofactor. The cofactor is Mn(2+).

It catalyses the reaction 2-C-methyl-D-erythritol 4-phosphate + NADP(+) = 1-deoxy-D-xylulose 5-phosphate + NADPH + H(+). The protein operates within isoprenoid biosynthesis; isopentenyl diphosphate biosynthesis via DXP pathway; isopentenyl diphosphate from 1-deoxy-D-xylulose 5-phosphate: step 1/6. Functionally, catalyzes the NADPH-dependent rearrangement and reduction of 1-deoxy-D-xylulose-5-phosphate (DXP) to 2-C-methyl-D-erythritol 4-phosphate (MEP). This chain is 1-deoxy-D-xylulose 5-phosphate reductoisomerase, found in Caulobacter vibrioides (strain NA1000 / CB15N) (Caulobacter crescentus).